We begin with the raw amino-acid sequence, 63 residues long: Small ribosomal subunit protein eS27 (63 aa).

Residues Cys-18, Cys-21, Cys-37, and Cys-40 each contribute to the Zn(2+) site. Residues 18 to 40 form a C4-type zinc finger; that stretch reads CLDCGNQQVVFDRAASYVQCIIC.

The protein belongs to the eukaryotic ribosomal protein eS27 family. In terms of assembly, part of the 30S ribosomal subunit. It depends on Zn(2+) as a cofactor.

In Methanothermobacter thermautotrophicus (strain ATCC 29096 / DSM 1053 / JCM 10044 / NBRC 100330 / Delta H) (Methanobacterium thermoautotrophicum), this protein is Small ribosomal subunit protein eS27.